The primary structure comprises 333 residues: Ornithine carbamoyltransferase (333 aa).

Residues 57–60 (STRT), arginine 108, and 135–138 (HPTQ) contribute to the carbamoyl phosphate site. Residues asparagine 168, aspartate 232, and 236–237 (SM) contribute to the L-ornithine site. Residues 274–275 (CL) and arginine 319 each bind carbamoyl phosphate.

This sequence belongs to the aspartate/ornithine carbamoyltransferase superfamily. OTCase family.

The protein localises to the cytoplasm. The enzyme catalyses carbamoyl phosphate + L-ornithine = L-citrulline + phosphate + H(+). Its pathway is amino-acid degradation; L-arginine degradation via ADI pathway; carbamoyl phosphate from L-arginine: step 2/2. Functionally, reversibly catalyzes the transfer of the carbamoyl group from carbamoyl phosphate (CP) to the N(epsilon) atom of ornithine (ORN) to produce L-citrulline. This is Ornithine carbamoyltransferase from Pediococcus pentosaceus (strain ATCC 25745 / CCUG 21536 / LMG 10740 / 183-1w).